A 275-amino-acid polypeptide reads, in one-letter code: 3-methyl-2-oxobutanoate hydroxymethyltransferase (275 aa).

Mg(2+) is bound by residues Asp44 and Asp83. Residues 44–45, Asp83, and Lys113 contribute to the 3-methyl-2-oxobutanoate site; that span reads DS. Position 115 (Glu115) interacts with Mg(2+). Glu182 functions as the Proton acceptor in the catalytic mechanism.

Belongs to the PanB family. In terms of assembly, homodecamer; pentamer of dimers. The cofactor is Mg(2+).

The protein resides in the cytoplasm. The catalysed reaction is 3-methyl-2-oxobutanoate + (6R)-5,10-methylene-5,6,7,8-tetrahydrofolate + H2O = 2-dehydropantoate + (6S)-5,6,7,8-tetrahydrofolate. The protein operates within cofactor biosynthesis; (R)-pantothenate biosynthesis; (R)-pantoate from 3-methyl-2-oxobutanoate: step 1/2. Catalyzes the reversible reaction in which hydroxymethyl group from 5,10-methylenetetrahydrofolate is transferred onto alpha-ketoisovalerate to form ketopantoate. This chain is 3-methyl-2-oxobutanoate hydroxymethyltransferase, found in Clostridioides difficile (strain 630) (Peptoclostridium difficile).